The following is a 545-amino-acid chain: Calcium-dependent protein kinase 10 (545 aa).

The disordered stretch occupies residues 1 to 36 (MGNCNACVRPDSKESKPSSKPKKPNRDRKLNPFAGD). G2 carries N-myristoyl glycine lipidation. The Protein kinase domain occupies 63–321 (YILGRELGRG…AQQVLAHPWI (259 aa)). Residues 69-77 (LGRGEFGIT) and K92 each bind ATP. Catalysis depends on D187, which acts as the Proton acceptor. Position 227 is a phosphoserine (S227). The autoinhibitory domain stretch occupies residues 327–357 (APNVPLGDIVRSRLKQFSMMNRFKKKVLRVI). EF-hand domains are found at residues 364–399 (QEVEVIKNMFSLMDDDKDGKITYPELKAGLQKVGSQ), 400–435 (LGEPEIKMLMEVADVDGNGFLDYGEFVAVIIHLQKI), 436–471 (ENDELFKLAFMFFDKDGSTYIELDELREALADELGE), and 472–507 (PDASVLSDIMREVDTDKDGRINYDEFVTMMKAGTDW). Ca(2+) contacts are provided by D377, D379, D381, K383, E388, D413, D415, N417, E424, D449, D451, S453, Y455, E460, D485, D487, D489, R491, and E496.

Belongs to the protein kinase superfamily. Ser/Thr protein kinase family. CDPK subfamily.

Its subcellular location is the membrane. The enzyme catalyses L-seryl-[protein] + ATP = O-phospho-L-seryl-[protein] + ADP + H(+). It catalyses the reaction L-threonyl-[protein] + ATP = O-phospho-L-threonyl-[protein] + ADP + H(+). With respect to regulation, activated by calcium. Autophosphorylation may play an important role in the regulation of the kinase activity. Its function is as follows. May play a role in signal transduction pathways that involve calcium as a second messenger. May be a positive regulator controlling stress signal transduction. This Arabidopsis thaliana (Mouse-ear cress) protein is Calcium-dependent protein kinase 10 (CPK10).